A 72-amino-acid polypeptide reads, in one-letter code: MFHCPKCHHAAHARTSRYLTENTKERYHQCQNINCSCTFMTMETIERFIVTPGAIDPAPPHPTVGGQRPLWL.

The sequence is that of Late control gene B protein (B) from Escherichia phage 186 (Bacteriophage 186).